The sequence spans 127 residues: Protein FAM229A (127 aa).

The disordered stretch occupies residues 1–96 (MLPSSTPGPG…ATEHNPVRPL (96 aa)). Low complexity predominate over residues 24 to 39 (RSPAARAPAAASSLGP).

It belongs to the FAM229 family.

This Homo sapiens (Human) protein is Protein FAM229A (FAM229A).